Consider the following 381-residue polypeptide: 4-hydroxy-3-methylbut-2-en-1-yl diphosphate synthase (flavodoxin) (381 aa).

Cys-280, Cys-283, Cys-315, and Glu-322 together coordinate [4Fe-4S] cluster.

The protein belongs to the IspG family. [4Fe-4S] cluster is required as a cofactor.

The enzyme catalyses (2E)-4-hydroxy-3-methylbut-2-enyl diphosphate + oxidized [flavodoxin] + H2O + 2 H(+) = 2-C-methyl-D-erythritol 2,4-cyclic diphosphate + reduced [flavodoxin]. Its pathway is isoprenoid biosynthesis; isopentenyl diphosphate biosynthesis via DXP pathway; isopentenyl diphosphate from 1-deoxy-D-xylulose 5-phosphate: step 5/6. Its function is as follows. Converts 2C-methyl-D-erythritol 2,4-cyclodiphosphate (ME-2,4cPP) into 1-hydroxy-2-methyl-2-(E)-butenyl 4-diphosphate. This is 4-hydroxy-3-methylbut-2-en-1-yl diphosphate synthase (flavodoxin) from Clavibacter michiganensis subsp. michiganensis (strain NCPPB 382).